The sequence spans 64 residues: Conotoxin Cal12.4 (64 aa).

Residues methionine 1–alanine 21 form the signal peptide.

The protein belongs to the conotoxin O1 superfamily. Post-translationally, contains 4 disulfide bonds. In terms of tissue distribution, expressed by the venom duct.

It is found in the secreted. Functionally, probable neurotoxin. This Californiconus californicus (California cone) protein is Conotoxin Cal12.4.